The sequence spans 226 residues: Pathogenesis-related protein R minor form (226 aa).

An N-terminal signal peptide occupies residues 1–25 (MNFLKSFPFYAFLCFGQYFVAVTHA). 8 disulfide bridges follow: Cys-34–Cys-225, Cys-75–Cys-85, Cys-90–Cys-96, Cys-140–Cys-214, Cys-145–Cys-197, Cys-153–Cys-163, Cys-167–Cys-176, and Cys-177–Cys-184.

This sequence belongs to the thaumatin family.

The protein localises to the vacuole. The protein is Pathogenesis-related protein R minor form of Nicotiana tabacum (Common tobacco).